The following is a 671-amino-acid chain: DNA ligase (671 aa).

NAD(+) contacts are provided by residues 38–42 (DKEFD), 87–88 (SL), and glutamate 113. Residue lysine 115 is the N6-AMP-lysine intermediate of the active site. 4 residues coordinate NAD(+): arginine 136, glutamate 170, lysine 282, and lysine 306. The Zn(2+) site is built by cysteine 396, cysteine 399, cysteine 414, and cysteine 419. Residues 586–671 (SDLQPFVGQS…LLKQEGIAID (86 aa)) enclose the BRCT domain.

This sequence belongs to the NAD-dependent DNA ligase family. LigA subfamily. The cofactor is Mg(2+). Mn(2+) serves as cofactor.

It catalyses the reaction NAD(+) + (deoxyribonucleotide)n-3'-hydroxyl + 5'-phospho-(deoxyribonucleotide)m = (deoxyribonucleotide)n+m + AMP + beta-nicotinamide D-nucleotide.. Functionally, DNA ligase that catalyzes the formation of phosphodiester linkages between 5'-phosphoryl and 3'-hydroxyl groups in double-stranded DNA using NAD as a coenzyme and as the energy source for the reaction. It is essential for DNA replication and repair of damaged DNA. This is DNA ligase from Leptospira biflexa serovar Patoc (strain Patoc 1 / Ames).